The sequence spans 255 residues: Triosephosphate isomerase (255 aa).

9–11 (NWK) is a binding site for substrate. The Electrophile role is filled by histidine 95. Glutamate 167 acts as the Proton acceptor in catalysis. Substrate-binding positions include glycine 173, serine 212, and 233 to 234 (GG).

Belongs to the triosephosphate isomerase family. In terms of assembly, homodimer.

It is found in the cytoplasm. It catalyses the reaction D-glyceraldehyde 3-phosphate = dihydroxyacetone phosphate. It functions in the pathway carbohydrate biosynthesis; gluconeogenesis. It participates in carbohydrate degradation; glycolysis; D-glyceraldehyde 3-phosphate from glycerone phosphate: step 1/1. Its function is as follows. Involved in the gluconeogenesis. Catalyzes stereospecifically the conversion of dihydroxyacetone phosphate (DHAP) to D-glyceraldehyde-3-phosphate (G3P). The chain is Triosephosphate isomerase from Enterobacter cloacae.